The primary structure comprises 194 residues: Peptidyl-tRNA hydrolase (194 aa).

Tyr-16 is a tRNA binding site. Catalysis depends on His-21, which acts as the Proton acceptor. Residues Phe-67, Asn-69, and Asn-115 each coordinate tRNA.

It belongs to the PTH family. As to quaternary structure, monomer.

It localises to the cytoplasm. The enzyme catalyses an N-acyl-L-alpha-aminoacyl-tRNA + H2O = an N-acyl-L-amino acid + a tRNA + H(+). Hydrolyzes ribosome-free peptidyl-tRNAs (with 1 or more amino acids incorporated), which drop off the ribosome during protein synthesis, or as a result of ribosome stalling. Its function is as follows. Catalyzes the release of premature peptidyl moieties from peptidyl-tRNA molecules trapped in stalled 50S ribosomal subunits, and thus maintains levels of free tRNAs and 50S ribosomes. This is Peptidyl-tRNA hydrolase from Shigella dysenteriae serotype 1 (strain Sd197).